Consider the following 358-residue polypeptide: Uroporphyrinogen decarboxylase (358 aa).

Substrate contacts are provided by residues arginine 29–arginine 33, phenylalanine 48, aspartate 79, tyrosine 155, serine 210, and histidine 330.

Belongs to the uroporphyrinogen decarboxylase family. In terms of assembly, homodimer.

It is found in the cytoplasm. It carries out the reaction uroporphyrinogen III + 4 H(+) = coproporphyrinogen III + 4 CO2. Its pathway is porphyrin-containing compound metabolism; protoporphyrin-IX biosynthesis; coproporphyrinogen-III from 5-aminolevulinate: step 4/4. In terms of biological role, catalyzes the decarboxylation of four acetate groups of uroporphyrinogen-III to yield coproporphyrinogen-III. The sequence is that of Uroporphyrinogen decarboxylase from Bordetella parapertussis (strain 12822 / ATCC BAA-587 / NCTC 13253).